A 152-amino-acid chain; its full sequence is Protein SprT-like (152 aa).

Positions 7–148 (QRLVEEVSLQ…GKCKGKLILI (142 aa)) constitute a SprT-like domain. His-67 lines the Zn(2+) pocket. Glu-68 is an active-site residue. Residue His-71 participates in Zn(2+) binding.

It belongs to the SprT family. The cofactor is Zn(2+).

It localises to the cytoplasm. In Bacillus cereus (strain ATCC 10987 / NRS 248), this protein is Protein SprT-like.